The following is a 286-amino-acid chain: 3-hydroxyanthranilate 3,4-dioxygenase (286 aa).

Positions 1–160 (MERCVRVKSW…SEQYRTGKPN (160 aa)) are domain A (catalytic). O2 is bound at residue R43. 3 residues coordinate Fe cation: H47, E53, and H91. E53 is a binding site for substrate. The substrate site is built by R95 and E105. A linker region spans residues 161–177 (PDQLLKEPPFPLSTRSV). The domain B stretch occupies residues 178 to 286 (MEPMSLKAWL…QDPACKKPLG (109 aa)).

This sequence belongs to the 3-HAO family. As to quaternary structure, monomer. Fe(2+) serves as cofactor.

It is found in the cytoplasm. The protein localises to the cytosol. The catalysed reaction is 3-hydroxyanthranilate + O2 = (2Z,4Z)-2-amino-3-carboxymuconate 6-semialdehyde. The protein operates within cofactor biosynthesis; NAD(+) biosynthesis; quinolinate from L-kynurenine: step 3/3. Functionally, catalyzes the oxidative ring opening of 3-hydroxyanthranilate to 2-amino-3-carboxymuconate semialdehyde, which spontaneously cyclizes to quinolinate. The polypeptide is 3-hydroxyanthranilate 3,4-dioxygenase (Haao) (Rattus norvegicus (Rat)).